Consider the following 86-residue polypeptide: Latartoxin-1b (86 aa).

The signal sequence occupies residues 1-19 (MKILVLAVVCTVLLQVALS). Positions 20–26 (ADSEEVR) are cleaved as a propeptide — removed in mature form. The Processing quadruplet motif motif lies at 23-26 (EEVR). 4 disulfide bridges follow: Cys28–Cys43, Cys35–Cys48, Cys42–Cys65, and Cys50–Cys63.

This sequence belongs to the neurotoxin 19 (CSTX) family. Contains 4 disulfide bonds. In terms of processing, cleavage of the propeptide depends on the processing quadruplet motif (XXXR, with at least one of X being E). In terms of tissue distribution, expressed by the venom gland.

It localises to the secreted. Insect toxin. The polypeptide is Latartoxin-1b (Lachesana tarabaevi (Spider)).